Reading from the N-terminus, the 680-residue chain is DNA ligase (680 aa).

NAD(+) is bound by residues aspartate 35 to aspartate 39, serine 86 to leucine 87, and glutamate 111. The N6-AMP-lysine intermediate role is filled by lysine 113. NAD(+)-binding residues include arginine 134, glutamate 174, lysine 290, and lysine 314. Residues cysteine 408, cysteine 411, cysteine 427, and cysteine 433 each contribute to the Zn(2+) site. The BRCT domain maps to valine 597 to glutamate 680.

This sequence belongs to the NAD-dependent DNA ligase family. LigA subfamily. Mg(2+) is required as a cofactor. Mn(2+) serves as cofactor.

It catalyses the reaction NAD(+) + (deoxyribonucleotide)n-3'-hydroxyl + 5'-phospho-(deoxyribonucleotide)m = (deoxyribonucleotide)n+m + AMP + beta-nicotinamide D-nucleotide.. Its function is as follows. DNA ligase that catalyzes the formation of phosphodiester linkages between 5'-phosphoryl and 3'-hydroxyl groups in double-stranded DNA using NAD as a coenzyme and as the energy source for the reaction. It is essential for DNA replication and repair of damaged DNA. In Corynebacterium glutamicum (strain ATCC 13032 / DSM 20300 / JCM 1318 / BCRC 11384 / CCUG 27702 / LMG 3730 / NBRC 12168 / NCIMB 10025 / NRRL B-2784 / 534), this protein is DNA ligase.